The primary structure comprises 336 residues: Cytoplasmic envelopment protein 2 (336 aa).

It belongs to the herpesviridae cytoplasmic envelopment protein 2 family. In terms of assembly, interacts with cytoplasmic envelopment protein 3 and with the capsid.

The protein resides in the virion tegument. It localises to the host cytoplasm. It is found in the host nucleus. In terms of biological role, plays a critical role in cytoplasmic virus egress. Participates in the final step of tegumentation and envelope acquisition within the host cytoplasm by directly interacting with the capsid. Upon virion binding to target cell, a signaling cascade is triggered to disrupt the interaction with the capsid, thereby preparing capsid uncoating. The sequence is that of Cytoplasmic envelopment protein 2 from Elephantid herpesvirus 1 (isolate Asian elephant/Berlin/Kiba/1998) (EIHV-1).